The chain runs to 340 residues: Uroporphyrinogen decarboxylase (340 aa).

Substrate is bound by residues 23 to 27, Asp-72, Tyr-147, Thr-202, and His-316; that span reads RQAGR.

Belongs to the uroporphyrinogen decarboxylase family. In terms of assembly, homodimer.

Its subcellular location is the cytoplasm. The enzyme catalyses uroporphyrinogen III + 4 H(+) = coproporphyrinogen III + 4 CO2. Its pathway is porphyrin-containing compound metabolism; protoporphyrin-IX biosynthesis; coproporphyrinogen-III from 5-aminolevulinate: step 4/4. In terms of biological role, catalyzes the decarboxylation of four acetate groups of uroporphyrinogen-III to yield coproporphyrinogen-III. The protein is Uroporphyrinogen decarboxylase of Geobacter sulfurreducens (strain ATCC 51573 / DSM 12127 / PCA).